The sequence spans 645 residues: UvrABC system protein B (645 aa).

The Helicase ATP-binding domain occupies 24-414; that stretch reads AGLNDNKRDQ…LFVEQVIRPT (391 aa). 37–44 provides a ligand contact to ATP; sequence GVTGSGKT. Positions 90-113 match the Beta-hairpin motif; sequence YYDYYQPEAYLPQTDTYIEKDSVI. A Helicase C-terminal domain is found at 426–591; it reads AEAQVYDVVH…VLPKTIIKPI (166 aa). The region spanning 610–645 is the UVR domain; that stretch reads KDTVSSLRKQMLAHAKNLEFEEAAKIKNIIGRINNL.

This sequence belongs to the UvrB family. As to quaternary structure, forms a heterotetramer with UvrA during the search for lesions. Interacts with UvrC in an incision complex.

It is found in the cytoplasm. Its function is as follows. The UvrABC repair system catalyzes the recognition and processing of DNA lesions. A damage recognition complex composed of 2 UvrA and 2 UvrB subunits scans DNA for abnormalities. Upon binding of the UvrA(2)B(2) complex to a putative damaged site, the DNA wraps around one UvrB monomer. DNA wrap is dependent on ATP binding by UvrB and probably causes local melting of the DNA helix, facilitating insertion of UvrB beta-hairpin between the DNA strands. Then UvrB probes one DNA strand for the presence of a lesion. If a lesion is found the UvrA subunits dissociate and the UvrB-DNA preincision complex is formed. This complex is subsequently bound by UvrC and the second UvrB is released. If no lesion is found, the DNA wraps around the other UvrB subunit that will check the other stand for damage. The sequence is that of UvrABC system protein B from Wolbachia sp. subsp. Brugia malayi (strain TRS).